The sequence spans 325 residues: Secreted frizzled-related protein 3 (325 aa).

Residues 1–32 (MVCGSPGGMLLLRAGLLALAALCLLRVPGARA) form the signal peptide. The 118-residue stretch at 33–150 (AACEPVRIPL…VYDRGVCISP (118 aa)) folds into the FZ domain. 5 disulfides stabilise this stretch: Cys35-Cys96, Cys43-Cys89, Cys80-Cys119, Cys108-Cys147, and Cys112-Cys136. The N-linked (GlcNAc...) asparagine glycan is linked to Asn49. An NTR domain is found at 178–298 (CKCKPIRATQ…WDMKLRHLGL (121 aa)). A disordered region spans residues 297-325 (GLSKSDSSNSDSTQSQKSGRNSNPRQARN). The segment covering 299–314 (SKSDSSNSDSTQSQKS) has biased composition (low complexity). Polar residues predominate over residues 315–325 (GRNSNPRQARN).

It belongs to the secreted frizzled-related protein (sFRP) family. Interacts with MYOC. As to expression, expressed primarily in the cartilaginous cores of the long bone during embryonic and fetal development and in the appendicular skeleton (6-13 weeks). At 13 weeks of gestation, transcripts were present in early chondroblasts of the tarsal bones of the foot, the carpal bones of the hands and the epiphysis of long bones. Highly expressed in placenta and heart, followed by brain, skeletal muscle, kidney and pancreas. Weakly expressed in lung and liver.

Its subcellular location is the secreted. Soluble frizzled-related proteins (sFRPS) function as modulators of Wnt signaling through direct interaction with Wnts. They have a role in regulating cell growth and differentiation in specific cell types. SFRP3/FRZB appears to be involved in limb skeletogenesis. Antagonist of Wnt8 signaling. Regulates chondrocyte maturation and long bone development. The protein is Secreted frizzled-related protein 3 (FRZB) of Homo sapiens (Human).